The primary structure comprises 747 residues: Flowering time control protein FCA (747 aa).

The interval 80–101 is disordered; the sequence is YSVRPTTPPVQQPLSGQKRGYP. RRM domains are found at residues 120 to 201 and 211 to 291; these read VKLF…YADG and FKLF…FAEP. Residues 291-301 show a composition bias toward basic and acidic residues; sequence PKRPKPGESRE. A disordered region spans residues 291–503; sequence PKRPKPGESR…QQPLQKMQHP (213 aa). 2 stretches are compositionally biased toward polar residues: residues 320-353 and 395-406; these read RPTSNFGDSSGDVSHTNPWRPATSRNVGPPSNTG and SSSATLQQQNRA. The span at 448-460 shows a compositional bias: low complexity; that stretch reads SSQLPTSQLPPQQ. The span at 461-498 shows a compositional bias: polar residues; sequence NISRATAPQTPLNINLRPTTVSSATVQFPPRSQQQPLQ. A WW domain is found at 591–624; that stretch reads GSVKCTWTEHTSPDGFKYYYNGLTGESKWEKPEE. Residues 630 to 641 show a composition bias toward basic and acidic residues; sequence REQQKQQQHQEK. Disordered stretches follow at residues 630–707 and 722–747; these read REQQ…SGIG and AASMNDISRTQQSRQSPQELMWKNKA. The segment covering 642-673 has biased composition (low complexity); sequence PTIQQSQTQLQPLQQQPQQVQQQYQGQQLQQP. Polar residues-rich tracts occupy residues 674–707 and 726–739; these read FYSSLYPTPGASHNTQYPSLPVGQNSQFPMSGIG and NDISRTQQSRQSPQ.

In terms of assembly, interacts (via C-terminus) with SWI3B and (via WW domain) with FY (via PPLPP motifs). Constitutively expressed, but the negative feedback maintains the active isoform a low level throughout much of the plant, except in meristematic cells at a specific time in development.

It is found in the nucleus. Its function is as follows. Plays a major role in the promotion of the transition of the vegetative meristem to reproductive development. Plays a role in the regulation of flowering time in the autonomous flowering pathway by decreasing FLOWERING LOCUS C mRNA levels. Required for RNA-mediated chromatin silencing of a range of loci in the genome. Cotranscriptionally recognizes aberrant RNA and marks it for silencing. Controls alternative cleavage and polyadenylation on pre-mRNAs and antisense RNAs. Acts redundantly with FPA to prevent the expression of distally polyadenylated antisense RNAs at the FLC locus. The chain is Flowering time control protein FCA (FCA) from Arabidopsis thaliana (Mouse-ear cress).